Reading from the N-terminus, the 79-residue chain is Protein Vpu (79 aa).

At 1-7 (MLLLIKL) the chain is on the extracellular side. Residues 8–28 (GFIGLAIETLIVIVVWAIVYR) form a helical membrane-spanning segment. Topologically, residues 29–79 (IYREVKVEEKISQLRQRIRDRAEDSGNESDGDAEELANLLPPDRIDQDNWV) are cytoplasmic. The segment at 48–79 (DRAEDSGNESDGDAEELANLLPPDRIDQDNWV) is disordered. Phosphoserine; by host CK2 occurs at positions 53 and 57. Residues 53–63 (SGNESDGDAEE) show a composition bias toward acidic residues.

Belongs to the HIV-1 VPU protein family. Homopentamer. Interacts with host CD4 and BRTC; these interactions induce proteasomal degradation of CD4. Interacts with host BST2; this interaction leads to the degradation of host BST2. Interacts with host FBXW11. Interacts with host AP1M1; this interaction plays a role in the mistrafficking and subsequent degradation of host BST2. Interacts with host RANBP2; this interaction allows Vpu to down-regulate host BLM sumoylation. Phosphorylated by host CK2. This phosphorylation is necessary for interaction with human BTRC and degradation of CD4.

The protein localises to the host membrane. Its activity is regulated as follows. Ion channel activity is inhibited by hexamethylene amiloride in vitro. In terms of biological role, enhances virion budding by targeting host CD4 and Tetherin/BST2 to proteasome degradation. Degradation of CD4 prevents any unwanted premature interactions between viral Env and its host receptor CD4 in the endoplasmic reticulum. Degradation of antiretroviral protein Tetherin/BST2 is important for virion budding, as BST2 tethers new viral particles to the host cell membrane. Mechanistically, Vpu bridges either CD4 or BST2 to BTRC, a substrate recognition subunit of the Skp1/Cullin/F-box protein E3 ubiquitin ligase, induces their ubiquitination and subsequent proteasomal degradation. The alteration of the E3 ligase specificity by Vpu seems to promote the degradation of host IKBKB, leading to NF-kappa-B down-regulation and subsequent apoptosis. Acts as a viroporin that forms an oligomeric ion channel in membranes. Modulates the host DNA repair mechanisms to promote degradation of nuclear viral cDNA in cells that are already productively infected in order to suppress immune sensing and proviral hyper-integration (superinfection). Manipulates PML-NBs and modulates SUMOylation of host BLM protein thereby enhancing its DNA-end processing activity toward viral unintegrated linear DNA. Also inhibits RAD52-mediated homologous repair of viral cDNA, preventing the generation of dead-end circular forms of single copies of the long terminal repeat and permitting sustained nucleolytic attack. This chain is Protein Vpu, found in Pan troglodytes (Chimpanzee).